We begin with the raw amino-acid sequence, 338 residues long: MKVLGIETSCDDCCIAVVENGIHILSNIKLNQKEHKKYYGVVPEIASRLHTEAIMSVCIKALKKANTKISEIDLIAVTSRPGLIGSLIVGLNFAKGLAISLKKPIICIDHILAHLYAPLMSSKIEYPFISLLLSGGHTLIAKQKNFDDVEILGKTLDDSCGEAFDKVAKHYNMGFPGGPNIEQISKNGDENTFKFPVTTFRKKENWYDFSYSGLKTACIHQLEKFKSKDNPTTKNNIAASFQKAAFENLITPLRRAIKDTQINKLVIAGGVASNLYLREKINKLKIQTYYPPLDLCTDNGAMIAGLGFNMYLKYGESPIETDVNSRIENYKNQYRRRK.

Fe cation is bound by residues His-110 and His-114. Substrate-binding positions include 132–136 (LLSGG), Asp-165, Gly-178, and Asn-274. Residue Asp-298 coordinates Fe cation.

This sequence belongs to the KAE1 / TsaD family. Fe(2+) serves as cofactor.

The protein resides in the cytoplasm. It carries out the reaction L-threonylcarbamoyladenylate + adenosine(37) in tRNA = N(6)-L-threonylcarbamoyladenosine(37) in tRNA + AMP + H(+). Its function is as follows. Required for the formation of a threonylcarbamoyl group on adenosine at position 37 (t(6)A37) in tRNAs that read codons beginning with adenine. Is involved in the transfer of the threonylcarbamoyl moiety of threonylcarbamoyl-AMP (TC-AMP) to the N6 group of A37, together with TsaE and TsaB. TsaD likely plays a direct catalytic role in this reaction. The polypeptide is tRNA N6-adenosine threonylcarbamoyltransferase (Borrelia garinii subsp. bavariensis (strain ATCC BAA-2496 / DSM 23469 / PBi) (Borreliella bavariensis)).